Consider the following 379-residue polypeptide: Polycomb group protein FIE2 (379 aa).

6 WD repeats span residues 85–128, 131–171, 177–217, 243–280, 292–333, and 340–378; these read DKDE…LAKS, GHGD…CILI, GHRN…LYVD, VHSN…QSPG, VPEC…PVLI, and QCKS…PSSR.

Belongs to the WD repeat ESC family. Widely expressed. Expressed in the embryo sac before pollination. After pollination, its expression persists, predominantly in the embryo and at lower levels in the endosperm.

The protein resides in the nucleus. Its function is as follows. Polycomb group (PcG) protein. PcG proteins act by forming multiprotein complexes, which are required to maintain the transcriptionally repressive state of homeotic genes throughout development. PcG proteins are not required to initiate repression, but to maintain it during later stages of development. They probably act via the methylation of histones, rendering chromatin heritably changed in its expressibility. This chain is Polycomb group protein FIE2 (FIE2), found in Zea mays (Maize).